The following is a 59-amino-acid chain: Large ribosomal subunit protein bL33 (59 aa).

Belongs to the bacterial ribosomal protein bL33 family.

This is Large ribosomal subunit protein bL33 from Neorickettsia sennetsu (strain ATCC VR-367 / Miyayama) (Ehrlichia sennetsu).